A 185-amino-acid polypeptide reads, in one-letter code: Tetratricopeptide repeat protein 36 homolog (185 aa).

3 TPR repeats span residues 53 to 86 (SREL…AQRA), 88 to 119 (VLNN…ANDQ), and 125 to 158 (CHAH…GSKF).

It belongs to the TTC36 family.

This is Tetratricopeptide repeat protein 36 homolog from Drosophila melanogaster (Fruit fly).